The chain runs to 142 residues: MAKKVTGYLKLQVPAGAANPSPPIGPALGQRGLNIMEFCKAFNAQTQKEEKNTPIPVIITIYADRSFTFEMKTPPMSYFLKQAAKIQSGSKAPGRDKAGKVTKAQVREIAEKKMKDLNCDTIESAMKMVEGSARSMGLEVAG.

Belongs to the universal ribosomal protein uL11 family. Part of the ribosomal stalk of the 50S ribosomal subunit. Interacts with L10 and the large rRNA to form the base of the stalk. L10 forms an elongated spine to which L12 dimers bind in a sequential fashion forming a multimeric L10(L12)X complex. In terms of processing, one or more lysine residues are methylated.

In terms of biological role, forms part of the ribosomal stalk which helps the ribosome interact with GTP-bound translation factors. This is Large ribosomal subunit protein uL11 from Bradyrhizobium diazoefficiens (strain JCM 10833 / BCRC 13528 / IAM 13628 / NBRC 14792 / USDA 110).